Here is a 691-residue protein sequence, read N- to C-terminus: DNA ligase (691 aa).

Residues 1–22 (MTTAEDVAGNPYISDPRTDFES) are disordered. NAD(+) contacts are provided by residues 59–63 (DRAYD), 107–108 (SI), and Glu137. The active-site N6-AMP-lysine intermediate is Lys139. The NAD(+) site is built by Arg160, Glu196, Lys311, and Lys335. Cys426, Cys429, Cys442, and Cys448 together coordinate Zn(2+). The BRCT domain occupies 608–691 (TDGDALDGQT…EELLDDAGVL (84 aa)). The disordered stretch occupies residues 637–667 (ERNDGSATSSVSGNTDYLVLGDNPGQRKQDD). Over residues 641–651 (GSATSSVSGNT) the composition is skewed to polar residues.

This sequence belongs to the NAD-dependent DNA ligase family. LigA subfamily. Mg(2+) serves as cofactor. Mn(2+) is required as a cofactor.

It carries out the reaction NAD(+) + (deoxyribonucleotide)n-3'-hydroxyl + 5'-phospho-(deoxyribonucleotide)m = (deoxyribonucleotide)n+m + AMP + beta-nicotinamide D-nucleotide.. Functionally, DNA ligase that catalyzes the formation of phosphodiester linkages between 5'-phosphoryl and 3'-hydroxyl groups in double-stranded DNA using NAD as a coenzyme and as the energy source for the reaction. It is essential for DNA replication and repair of damaged DNA. This is DNA ligase from Haloarcula marismortui (strain ATCC 43049 / DSM 3752 / JCM 8966 / VKM B-1809) (Halobacterium marismortui).